Here is a 235-residue protein sequence, read N- to C-terminus: Endonuclease V (235 aa).

Residues Asp47 and Asp115 each coordinate Mg(2+).

The protein belongs to the endonuclease V family. Mg(2+) is required as a cofactor.

It is found in the cytoplasm. It catalyses the reaction Endonucleolytic cleavage at apurinic or apyrimidinic sites to products with a 5'-phosphate.. DNA repair enzyme involved in the repair of deaminated bases. Selectively cleaves double-stranded DNA at the second phosphodiester bond 3' to a deoxyinosine leaving behind the intact lesion on the nicked DNA. This chain is Endonuclease V, found in Myxococcus xanthus (strain DK1622).